Consider the following 411-residue polypeptide: Acetylornithine aminotransferase, mitochondrial (411 aa).

Position 262 is an N6-(pyridoxal phosphate)lysine (K262).

The protein belongs to the class-III pyridoxal-phosphate-dependent aminotransferase family. Pyridoxal 5'-phosphate is required as a cofactor.

Its subcellular location is the mitochondrion matrix. It catalyses the reaction N(2)-acetyl-L-ornithine + 2-oxoglutarate = N-acetyl-L-glutamate 5-semialdehyde + L-glutamate. It participates in amino-acid biosynthesis; L-arginine biosynthesis; N(2)-acetyl-L-ornithine from L-glutamate: step 4/4. In Yarrowia lipolytica (strain CLIB 122 / E 150) (Yeast), this protein is Acetylornithine aminotransferase, mitochondrial (ARG8).